Consider the following 471-residue polypeptide: 5-hydroxytryptamine receptor 2B (471 aa).

The Extracellular segment spans residues 1–26 (MFQAAVGPLQTNISLPEETPGLELNW). Asn12 is a glycosylation site (N-linked (GlcNAc...) asparagine). Residues 27–49 (AALLIVMVIIPTIGGNILVILAV) form a helical membrane-spanning segment. Over 50-60 (WLEKKLQNATN) the chain is Cytoplasmic. The chain crosses the membrane as a helical span at residues 61–83 (FFLMSLAVADLLVGLLVMPIALI). Topologically, residues 84–99 (TILYDSDWPLPEPLCP) are extracellular. A disulfide bridge connects residues Cys98 and Cys182. The helical transmembrane segment at 100 to 121 (IWLFLDVLFSTASIMHLCAISL) threads the bilayer. The ergotamine site is built by Asp105 and Thr110. Residues 122–124 (DRY) carry the DRY motif; important for ligand-induced conformation changes motif. At 122–141 (DRYIAIKKPIQHSQYKSRAK) the chain is on the cytoplasmic side. Residues 142–162 (VMLKIALVWLISICIAIPIPI) form a helical membrane-spanning segment. Residues 163-191 (KGLRNYPHPNNITFTSNHTCVLKTDTFQE) lie on the Extracellular side of the membrane. Asn173 and Asn179 each carry an N-linked (GlcNAc...) asparagine glycan. Leu184 is an ergotamine binding site. The short motif at 187–190 (DTFQ) is the [DE]RFG motif; may stabilize a conformation that preferentially activates signaling via beta-arrestin family members element. The helical transmembrane segment at 192–214 (FIIFGSLVAFFIPLTIMMIIYFL) threads the bilayer. The Cytoplasmic portion of the chain corresponds to 215–308 (TVRVLRKKVY…TLTNEQRASK (94 aa)). A helical transmembrane segment spans residues 309-329 (VLGIVFLLFVVMWCPFFITNI). Topologically, residues 330–344 (TSALCGPCDANIIGR) are extracellular. Cys334 and Cys337 are disulfide-bonded. The helical transmembrane segment at 345-366 (LMEIFSWVGYVSSGINPLVYTL) threads the bilayer. Positions 360–364 (NPLVY) match the NPxxY motif; important for ligand-induced conformation changes and signaling motif. Residues 367–471 (FNKTFRQAFT…CKQEERVSCV (105 aa)) are Cytoplasmic-facing. Cys381 carries S-palmitoyl cysteine lipidation. The PDZ-binding signature appears at 469–471 (SCV).

The protein belongs to the G-protein coupled receptor 1 family. In terms of tissue distribution, detected in brain, heart and gut.

It is found in the cell membrane. Its subcellular location is the synapse. The protein localises to the synaptosome. Functionally, G-protein coupled receptor for 5-hydroxytryptamine (serotonin). Also functions as a receptor for various ergot alkaloid derivatives and psychoactive substances. Ligand binding causes a conformation change that triggers signaling via guanine nucleotide-binding proteins (G proteins) and modulates the activity of downstream effectors. HTR2B is coupled to G(q)/G(11) G alpha proteins and activates phospholipase C-beta, releasing diacylglycerol (DAG) and inositol 1,4,5-trisphosphate (IP3) second messengers that modulate the activity of phosphatidylinositol 3-kinase and promote the release of Ca(2+) ions from intracellular stores, respectively. Beta-arrestin family members inhibit signaling via G proteins and mediate activation of alternative signaling pathways. Plays a role in the regulation of dopamine and 5-hydroxytryptamine release, 5-hydroxytryptamine uptake and in the regulation of extracellular dopamine and 5-hydroxytryptamine levels, and thereby affects neural activity. The chain is 5-hydroxytryptamine receptor 2B (htr2b) from Dichotomyctere fluviatilis (Green pufferfish).